A 203-amino-acid polypeptide reads, in one-letter code: Glycerol-3-phosphate acyltransferase (203 aa).

Transmembrane regions (helical) follow at residues 6-26 (LTLL…AVLV), 82-102 (AISL…PIFF), 118-138 (APIG…LVLI), and 141-161 (YSSL…WWLD).

Belongs to the PlsY family. In terms of assembly, probably interacts with PlsX.

It localises to the cell inner membrane. It catalyses the reaction an acyl phosphate + sn-glycerol 3-phosphate = a 1-acyl-sn-glycero-3-phosphate + phosphate. It participates in lipid metabolism; phospholipid metabolism. In terms of biological role, catalyzes the transfer of an acyl group from acyl-phosphate (acyl-PO(4)) to glycerol-3-phosphate (G3P) to form lysophosphatidic acid (LPA). This enzyme utilizes acyl-phosphate as fatty acyl donor, but not acyl-CoA or acyl-ACP. This chain is Glycerol-3-phosphate acyltransferase, found in Shewanella sp. (strain MR-4).